The primary structure comprises 424 residues: Serine hydroxymethyltransferase (424 aa).

Residues Leu-118 and 122–124 contribute to the (6S)-5,6,7,8-tetrahydrofolate site; that span reads GHL. An N6-(pyridoxal phosphate)lysine modification is found at Lys-227. (6S)-5,6,7,8-tetrahydrofolate contacts are provided by residues Glu-243 and 351 to 353; that span reads SPF.

Belongs to the SHMT family. Homodimer. Pyridoxal 5'-phosphate serves as cofactor.

It localises to the cytoplasm. The enzyme catalyses (6R)-5,10-methylene-5,6,7,8-tetrahydrofolate + glycine + H2O = (6S)-5,6,7,8-tetrahydrofolate + L-serine. The protein operates within one-carbon metabolism; tetrahydrofolate interconversion. It participates in amino-acid biosynthesis; glycine biosynthesis; glycine from L-serine: step 1/1. Catalyzes the reversible interconversion of serine and glycine with tetrahydrofolate (THF) serving as the one-carbon carrier. This reaction serves as the major source of one-carbon groups required for the biosynthesis of purines, thymidylate, methionine, and other important biomolecules. Also exhibits THF-independent aldolase activity toward beta-hydroxyamino acids, producing glycine and aldehydes, via a retro-aldol mechanism. The protein is Serine hydroxymethyltransferase of Thermosipho africanus (strain TCF52B).